We begin with the raw amino-acid sequence, 453 residues long: Cytochrome P450 monooxygenase PC-20 (453 aa).

The next 2 helical transmembrane spans lie at 5 to 25 (LGPF…LCVI) and 49 to 69 (LGVV…LFCV). Cys387 lines the heme pocket.

Belongs to the cytochrome P450 family. Heme serves as cofactor.

The protein resides in the membrane. It functions in the pathway secondary metabolite biosynthesis. In terms of biological role, cytochrome P450 monooxygenase; part of the gene cluster that mediates the biosynthesis of the indole diterpenes penitrems. The geranylgeranyl diphosphate (GGPP) synthase penG catalyzes the first step in penitrem biosynthesis via conversion of farnesyl pyrophosphate and isopentyl pyrophosphate into geranylgeranyl pyrophosphate (GGPP). Condensation of indole-3-glycerol phosphate with GGPP by the prenyl transferase penC then forms 3-geranylgeranylindole (3-GGI). Epoxidation by the FAD-dependent monooxygenase penM leads to a epoxidized-GGI that is substrate of the terpene cyclase penB for cyclization to yield paspaline. Paspaline is subsequently converted to 13-desoxypaxilline by the cytochrome P450 monooxygenase penP, the latter being then converted to paxilline by the cytochrome P450 monooxygenase penQ. Paxilline is converted to beta-paxitriol via C-10 ketoreduction by the short-chain dehydrogenase PC-15 which can be monoprenylated at the C-20 by the indole diterpene prenyltransferase penD. A two-step elimination (acetylation and elimination) process performed by the O-acetyltransferase PC-16 and the P.simplicissimum ptmI-ortholog not yet identified in P.crustosum, leads to the production of the prenylated form of penijanthine. The FAD-linked oxidoreductase ptmO then converts the prenylated form of penijanthine into PC-M5 which is in turn transformed into PC-M4 by the aromatic dimethylallyltransferase PC-22. A series of oxidation steps involving 4 cytochrome P450 monooxygenases (PC-21, PC-05, PC-23, PC-20) and a FAD-dependent monooxygenase (PC-14) are required for the transformation of PC-M4 to penitrems A and E. Synthesis of these final products is proposed to proceed via penitrems D and C (PC-21, PC-05, PC-14) and penitrems B and F (PC-21, PC-05, PC-14, PC-23). This chain is Cytochrome P450 monooxygenase PC-20, found in Penicillium crustosum (Blue mold fungus).